A 250-amino-acid chain; its full sequence is 5-oxoprolinase subunit A (250 aa).

This sequence belongs to the LamB/PxpA family. In terms of assembly, forms a complex composed of PxpA, PxpB and PxpC.

It carries out the reaction 5-oxo-L-proline + ATP + 2 H2O = L-glutamate + ADP + phosphate + H(+). Its function is as follows. Catalyzes the cleavage of 5-oxoproline to form L-glutamate coupled to the hydrolysis of ATP to ADP and inorganic phosphate. The chain is 5-oxoprolinase subunit A from Thermus thermophilus (strain ATCC BAA-163 / DSM 7039 / HB27).